The primary structure comprises 97 residues: RNA-binding protein Hfq (97 aa).

The region spanning 10 to 70 (DPFLNALRKE…ISTIVPARSV (61 aa)) is the Sm domain. The tract at residues 75–97 (ENRPQAAPASTLVQVETVQQPAE) is disordered. A compositionally biased stretch (polar residues) spans 85–97 (TLVQVETVQQPAE).

It belongs to the Hfq family. As to quaternary structure, homohexamer.

Functionally, RNA chaperone that binds small regulatory RNA (sRNAs) and mRNAs to facilitate mRNA translational regulation in response to envelope stress, environmental stress and changes in metabolite concentrations. Also binds with high specificity to tRNAs. The chain is RNA-binding protein Hfq from Neisseria meningitidis serogroup C / serotype 2a (strain ATCC 700532 / DSM 15464 / FAM18).